Here is a 311-residue protein sequence, read N- to C-terminus: Ornithine carbamoyltransferase (311 aa).

Residues serine 54 to arginine 58, asparagine 81, arginine 104, and histidine 131 to glutamine 134 each bind carbamoyl phosphate. L-ornithine is bound by residues asparagine 164, aspartate 225, and aspartate 229 to methionine 230. Carbamoyl phosphate contacts are provided by residues histidine 268–proline 271, threonine 279, and arginine 297.

This sequence belongs to the aspartate/ornithine carbamoyltransferase superfamily. OTCase family.

It is found in the cytoplasm. It carries out the reaction carbamoyl phosphate + L-ornithine = L-citrulline + phosphate + H(+). The protein operates within amino-acid biosynthesis; L-arginine biosynthesis; L-arginine from L-ornithine and carbamoyl phosphate: step 1/3. In terms of biological role, reversibly catalyzes the transfer of the carbamoyl group from carbamoyl phosphate (CP) to the N(epsilon) atom of ornithine (ORN) to produce L-citrulline. The chain is Ornithine carbamoyltransferase (argF) from Leptospira interrogans serogroup Icterohaemorrhagiae serovar copenhageni (strain Fiocruz L1-130).